A 448-amino-acid chain; its full sequence is Proteases secretion protein PrtE (448 aa).

At 1-30 the chain is on the cytoplasmic side; the sequence is MTGMDITTQDELNEAAMRDRASRDEERALR. Residues 31 to 50 form a helical membrane-spanning segment; the sequence is LGWWLVLAGFGGFLLWALLA. At 51–448 the chain is on the periplasmic side; that stretch reads PLDKGVAVQG…DRMHLALTEE (398 aa).

It belongs to the membrane fusion protein (MFP) (TC 8.A.1) family.

The protein localises to the cell inner membrane. Involved in the secretion of proteases A, B, C and G. This is Proteases secretion protein PrtE (prtE) from Dickeya chrysanthemi (Pectobacterium chrysanthemi).